A 236-amino-acid chain; its full sequence is Acetate--CoA ligase [ADP-forming] II subunit beta (236 aa).

Residues 26 to 62 (KQVLKAYGLPVPEEKLAKTLDEALKYAEEIGYPVAMK) form the ATP-grasp domain. 52 to 63 (AEEIGYPVAMKL) provides a ligand contact to ATP.

The protein belongs to the acetate CoA ligase beta subunit family. Heterotetramer of two alpha and two beta subunits.

The catalysed reaction is acetate + ATP + CoA = acetyl-CoA + ADP + phosphate. Functionally, catalyzes the reversible formation of acetate and ATP from acetyl-CoA by using ADP and phosphate. Can use other substrates such as phenylacetyl-CoA, indoleacetyl-CoA and isobutyryl-CoA, but not succinyl-CoA. Seems to be involved primarily in the degradation of aryl-CoA esters to the corresponding acids. Participates in the conversion of acetyl-CoA to acetate and in the degradation of branched-chain amino acids via branched-chain-acyl-CoA esters. The protein is Acetate--CoA ligase [ADP-forming] II subunit beta of Pyrococcus furiosus (strain ATCC 43587 / DSM 3638 / JCM 8422 / Vc1).